A 161-amino-acid chain; its full sequence is Sterile alpha motif domain-containing protein 12 (161 aa).

The interval Q44–K64 is disordered. Residues W77–R143 enclose the SAM domain.

The protein is Sterile alpha motif domain-containing protein 12 (Samd12) of Mus musculus (Mouse).